Here is a 239-residue protein sequence, read N- to C-terminus: ATP-dependent dethiobiotin synthetase BioD (239 aa).

ATP is bound at residue 22 to 27; sequence GIGKTV. Threonine 26 is a binding site for Mg(2+). Lysine 47 is an active-site residue. Residue threonine 51 coordinates substrate. Residues aspartate 59, 124–127, and 184–185 contribute to the ATP site; these read EGVG and NR. Mg(2+) contacts are provided by aspartate 59 and glutamate 124.

Belongs to the dethiobiotin synthetase family. As to quaternary structure, homodimer. The cofactor is Mg(2+).

It localises to the cytoplasm. It catalyses the reaction (7R,8S)-7,8-diammoniononanoate + CO2 + ATP = (4R,5S)-dethiobiotin + ADP + phosphate + 3 H(+). Its pathway is cofactor biosynthesis; biotin biosynthesis; biotin from 7,8-diaminononanoate: step 1/2. Catalyzes a mechanistically unusual reaction, the ATP-dependent insertion of CO2 between the N7 and N8 nitrogen atoms of 7,8-diaminopelargonic acid (DAPA, also called 7,8-diammoniononanoate) to form a ureido ring. The chain is ATP-dependent dethiobiotin synthetase BioD from Chlorobaculum tepidum (strain ATCC 49652 / DSM 12025 / NBRC 103806 / TLS) (Chlorobium tepidum).